The following is a 169-amino-acid chain: Photosystem I assembly protein Ycf3 (169 aa).

TPR repeat units follow at residues 35–68 (AFTYYRDGMSAQSEGEYAEALQNYYEAMRLETDP), 72–105 (SYILYNIGLVHTSNGEHTKALEYYFQALERNPSL), and 120–153 (GEQAIRQGDPETAEAWFDQAAEYWEQAIALAPGN).

This sequence belongs to the Ycf3 family.

It is found in the plastid. Its subcellular location is the chloroplast thylakoid membrane. Essential for the assembly of the photosystem I (PSI) complex. May act as a chaperone-like factor to guide the assembly of the PSI subunits. This chain is Photosystem I assembly protein Ycf3, found in Pinus koraiensis (Korean pine).